The chain runs to 621 residues: ATP-dependent lipid A-core flippase (621 aa).

The next 5 membrane-spanning stretches (helical) occupy residues I32–F52, V91–I111, I192–L212, S286–W306, and Y312–I332. The ABC transmembrane type-1 domain occupies V33 to T344. One can recognise an ABC transporter domain in the interval F378–I611. Residue G410–S417 participates in ATP binding.

It belongs to the ABC transporter superfamily. Lipid exporter (TC 3.A.1.106) family. Homodimer.

It localises to the cell inner membrane. It carries out the reaction ATP + H2O + lipid A-core oligosaccharideSide 1 = ADP + phosphate + lipid A-core oligosaccharideSide 2.. Involved in lipopolysaccharide (LPS) biosynthesis. Translocates lipid A-core from the inner to the outer leaflet of the inner membrane. Transmembrane domains (TMD) form a pore in the inner membrane and the ATP-binding domain (NBD) is responsible for energy generation. In Neisseria meningitidis serogroup B (strain ATCC BAA-335 / MC58), this protein is ATP-dependent lipid A-core flippase.